The primary structure comprises 219 residues: Thiamine-phosphate synthase (219 aa).

4-amino-2-methyl-5-(diphosphooxymethyl)pyrimidine is bound by residues 48 to 52 and Asn-84; that span reads QFRQK. Mg(2+) contacts are provided by Asp-85 and Asp-104. Ser-123 contributes to the 4-amino-2-methyl-5-(diphosphooxymethyl)pyrimidine binding site. 150-152 provides a ligand contact to 2-[(2R,5Z)-2-carboxy-4-methylthiazol-5(2H)-ylidene]ethyl phosphate; that stretch reads TQS. A 4-amino-2-methyl-5-(diphosphooxymethyl)pyrimidine-binding site is contributed by Lys-153. Residues Gly-181 and 199 to 200 contribute to the 2-[(2R,5Z)-2-carboxy-4-methylthiazol-5(2H)-ylidene]ethyl phosphate site; that span reads IS.

This sequence belongs to the thiamine-phosphate synthase family. Requires Mg(2+) as cofactor.

It catalyses the reaction 2-[(2R,5Z)-2-carboxy-4-methylthiazol-5(2H)-ylidene]ethyl phosphate + 4-amino-2-methyl-5-(diphosphooxymethyl)pyrimidine + 2 H(+) = thiamine phosphate + CO2 + diphosphate. It carries out the reaction 2-(2-carboxy-4-methylthiazol-5-yl)ethyl phosphate + 4-amino-2-methyl-5-(diphosphooxymethyl)pyrimidine + 2 H(+) = thiamine phosphate + CO2 + diphosphate. The catalysed reaction is 4-methyl-5-(2-phosphooxyethyl)-thiazole + 4-amino-2-methyl-5-(diphosphooxymethyl)pyrimidine + H(+) = thiamine phosphate + diphosphate. It participates in cofactor biosynthesis; thiamine diphosphate biosynthesis; thiamine phosphate from 4-amino-2-methyl-5-diphosphomethylpyrimidine and 4-methyl-5-(2-phosphoethyl)-thiazole: step 1/1. Condenses 4-methyl-5-(beta-hydroxyethyl)thiazole monophosphate (THZ-P) and 2-methyl-4-amino-5-hydroxymethyl pyrimidine pyrophosphate (HMP-PP) to form thiamine monophosphate (TMP). The protein is Thiamine-phosphate synthase of Helicobacter pylori (strain Shi470).